The sequence spans 253 residues: Claudin domain-containing protein 1 (253 aa).

The helical transmembrane segment at 5 to 25 (FATAFVIACVLSLISTIYMAA) threads the bilayer. N-linked (GlcNAc...) asparagine glycosylation is found at Asn-42 and Asn-72. 3 consecutive transmembrane segments (helical) span residues 141 to 161 (FLLPFVSLGLMCFGALIGLCA), 175 to 195 (ILHLLAGLCTLGSVSCYVAGI), and 216 to 236 (FCLACVSAPLQFMASALFIWA).

The protein belongs to the PMP-22/EMP/MP20 family.

It is found in the cell junction. It localises to the tight junction. Its subcellular location is the cell membrane. Functionally, plays a role in negatively regulating the permeability of cells to small molecules. In Macaca fascicularis (Crab-eating macaque), this protein is Claudin domain-containing protein 1 (CLDND1).